We begin with the raw amino-acid sequence, 516 residues long: AMP phosphorylase (516 aa).

Residues Gly-169, Ser-195 to Gly-200, and Thr-204 contribute to the AMP site. Asp-257 acts as the Proton donor in catalysis. AMP-binding residues include Ser-265 and Lys-289.

This sequence belongs to the thymidine/pyrimidine-nucleoside phosphorylase family. Type 2 subfamily.

It carries out the reaction AMP + phosphate = alpha-D-ribose 1,5-bisphosphate + adenine. It catalyses the reaction CMP + phosphate = cytosine + alpha-D-ribose 1,5-bisphosphate. The catalysed reaction is UMP + phosphate = alpha-D-ribose 1,5-bisphosphate + uracil. Its function is as follows. Catalyzes the conversion of AMP and phosphate to adenine and ribose 1,5-bisphosphate (R15P). Exhibits phosphorylase activity toward CMP and UMP in addition to AMP. Functions in an archaeal AMP degradation pathway, together with R15P isomerase and RubisCO. This is AMP phosphorylase from Methanospirillum hungatei JF-1 (strain ATCC 27890 / DSM 864 / NBRC 100397 / JF-1).